The sequence spans 322 residues: Serine/threonine-protein phosphatase PP1-2 (322 aa).

Mn(2+)-binding residues include aspartate 60, histidine 62, aspartate 88, and asparagine 120. Histidine 121 functions as the Proton donor in the catalytic mechanism. 2 residues coordinate Mn(2+): histidine 169 and histidine 244. Positions 298 to 322 (RQRVSQSSIKESKSATNSLKKSKNN) are disordered. Residues 301-316 (VSQSSIKESKSATNSL) are compositionally biased toward polar residues.

The protein belongs to the PPP phosphatase family. PP-1 subfamily. Mn(2+) serves as cofactor.

The enzyme catalyses O-phospho-L-seryl-[protein] + H2O = L-seryl-[protein] + phosphate. The catalysed reaction is O-phospho-L-threonyl-[protein] + H2O = L-threonyl-[protein] + phosphate. Essential role in cell cycle control. PP1 is perhaps required for exit from mitosis. The chain is Serine/threonine-protein phosphatase PP1-2 (sds21) from Schizosaccharomyces pombe (strain 972 / ATCC 24843) (Fission yeast).